A 256-amino-acid chain; its full sequence is Floral homeotic protein APETALA 1 (256 aa).

The region spanning Met-1–Ser-61 is the MADS-box domain. One can recognise a K-box domain in the interval Asn-88–Ile-178.

As to quaternary structure, homodimer capable of binding to CArG-box sequences.

It is found in the nucleus. Transcription factor that promotes early floral meristem identity in synergy with LEAFY. Displays a redundant function with CAULIFLOWER in the up-regulation of LEAFY. Required subsequently for the transition of an inflorescence meristem into a floral meristem, and for the normal development of sepals and petals in flowers. Regulates positively B class homeotic proteins. The sequence is that of Floral homeotic protein APETALA 1 (AP1) from Citrus sinensis (Sweet orange).